Consider the following 614-residue polypeptide: Bifunctional 3'-phosphoadenosine 5'-phosphosulfate synthase 2 (614 aa).

Residues 1–215 form an adenylyl-sulfate kinase region; that stretch reads MSGIKKQKTE…VVELLQEQNI (215 aa). ATP is bound at residue 52–57; the sequence is GAGKTT. Residues 79–82, Phe91, 96–99, 122–123, Lys161, and 174–175 each bind adenosine 5'-phosphosulfate; these read DNVR, REEN, IS, and GF. Residues Ser197, 409 to 412, 511 to 515, and Ala553 each bind ATP; these read QLRN and GRDPA. Residues 224-614 form a sulfate adenylyltransferase region; sequence IHELFVPENK…TDYYRSLEKN (391 aa).

It in the N-terminal section; belongs to the APS kinase family. In the C-terminal section; belongs to the sulfate adenylyltransferase family. Expressed in cartilage and adrenal gland.

It catalyses the reaction sulfate + ATP + H(+) = adenosine 5'-phosphosulfate + diphosphate. It carries out the reaction adenosine 5'-phosphosulfate + ATP = 3'-phosphoadenylyl sulfate + ADP + H(+). The protein operates within sulfur metabolism; sulfate assimilation. Bifunctional enzyme with both ATP sulfurylase and APS kinase activity, which mediates two steps in the sulfate activation pathway. The first step is the transfer of a sulfate group to ATP to yield adenosine 5'-phosphosulfate (APS), and the second step is the transfer of a phosphate group from ATP to APS yielding 3'-phosphoadenylylsulfate/PAPS, the activated sulfate donor used by sulfotransferases. In mammals, PAPS is the sole source of sulfate while APS appears to only be an intermediate in the sulfate-activation pathway. Plays indirectly an important role in skeletogenesis during postnatal growth. This is Bifunctional 3'-phosphoadenosine 5'-phosphosulfate synthase 2 (PAPSS2) from Homo sapiens (Human).